The sequence spans 257 residues: 7-carboxy-7-deazaguanine synthase (257 aa).

The disordered stretch occupies residues 1–25; that stretch reads MKSVDHPVDVLPAEHSAETPGDARA. Substrate contacts are provided by residues 39-41 and Arg54; that span reads RQG. In terms of domain architecture, Radical SAM core spans 45-244; sequence LTGTESVFIR…AISRGYQYCD (200 aa). [4Fe-4S] cluster-binding residues include Cys58, Cys62, and Cys65. Thr67 is a binding site for Mg(2+). Thr99 contributes to the substrate binding site. Residues Gly101 and 143–145 each bind S-adenosyl-L-methionine; that span reads SPK.

Belongs to the radical SAM superfamily. 7-carboxy-7-deazaguanine synthase family. In terms of assembly, homodimer. [4Fe-4S] cluster serves as cofactor. It depends on S-adenosyl-L-methionine as a cofactor. Requires Mg(2+) as cofactor.

The catalysed reaction is 6-carboxy-5,6,7,8-tetrahydropterin + H(+) = 7-carboxy-7-deazaguanine + NH4(+). It participates in purine metabolism; 7-cyano-7-deazaguanine biosynthesis. Functionally, catalyzes the complex heterocyclic radical-mediated conversion of 6-carboxy-5,6,7,8-tetrahydropterin (CPH4) to 7-carboxy-7-deazaguanine (CDG), a step common to the biosynthetic pathways of all 7-deazapurine-containing compounds. This Rhodopirellula baltica (strain DSM 10527 / NCIMB 13988 / SH1) protein is 7-carboxy-7-deazaguanine synthase.